We begin with the raw amino-acid sequence, 470 residues long: Beta-Ala-Xaa dipeptidase (470 aa).

His-87 is a binding site for Zn(2+). Residue Asp-89 is part of the active site. Asp-119 contributes to the Zn(2+) binding site. Residue Glu-153 is the Proton acceptor of the active site. Positions 154 and 177 each coordinate Zn(2+). Arg-350 contributes to the substrate binding site. His-439 provides a ligand contact to Zn(2+).

The protein belongs to the peptidase M20A family. The cofactor is Zn(2+).

It is found in the cytoplasm. With respect to regulation, fully inhibited by 1,10-phenanthroline or EDTA. In terms of biological role, is a relatively unspecific dipeptidase cleaving a variety of dipeptides, notably those with an N-terminal beta-Ala or D-Ala residue, e.g. carnosine (beta-Ala-His). To a lesser extent, also shows aminopeptidase activity, since it is able to catalyze the removal of the N-terminal amino acid from a few distinct tripeptides. This chain is Beta-Ala-Xaa dipeptidase (pepV), found in Lactobacillus delbrueckii subsp. lactis.